A 280-amino-acid polypeptide reads, in one-letter code: uncharacterized protein (280 aa).

CBS domains are found at residues 10–67 (QNKK…GSKY), 90–146 (MEEN…KIDE), 154–209 (ITRD…DWAF), and 229–280 (MKRD…KYFA).

This is an uncharacterized protein from Methanocaldococcus jannaschii (strain ATCC 43067 / DSM 2661 / JAL-1 / JCM 10045 / NBRC 100440) (Methanococcus jannaschii).